Here is a 144-residue protein sequence, read N- to C-terminus: 3-dehydroquinate dehydratase (144 aa).

The Proton acceptor role is filled by tyrosine 22. Positions 73, 79, and 86 each coordinate substrate. Histidine 99 serves as the catalytic Proton donor. Residues 100–101 (IS) and arginine 110 contribute to the substrate site.

This sequence belongs to the type-II 3-dehydroquinase family. In terms of assembly, homododecamer.

The enzyme catalyses 3-dehydroquinate = 3-dehydroshikimate + H2O. The protein operates within metabolic intermediate biosynthesis; chorismate biosynthesis; chorismate from D-erythrose 4-phosphate and phosphoenolpyruvate: step 3/7. Catalyzes a trans-dehydration via an enolate intermediate. The polypeptide is 3-dehydroquinate dehydratase (Clostridium acetobutylicum (strain ATCC 824 / DSM 792 / JCM 1419 / IAM 19013 / LMG 5710 / NBRC 13948 / NRRL B-527 / VKM B-1787 / 2291 / W)).